The chain runs to 676 residues: Probable LRR receptor-like serine/threonine-protein kinase At4g31250 (676 aa).

The signal sequence occupies residues 1 to 26 (MTRDDKFPIVYSLLLIVLLFVSPIYG). Over 27–242 (DGDADALLKF…LLPCRYTRPP (216 aa)) the chain is Extracellular. Residues Asn-42, Asn-73, and Asn-83 are each glycosylated (N-linked (GlcNAc...) asparagine). 5 LRR repeats span residues 98–122 (IRGLKSISFMRNHFEGKIPRGIDGL), 123–146 (VSLAHLYLAHNQFTGEIDGDLFSG), 148–171 (KALLKVHLEGNRFSGEIPESLGKL), 172–195 (PKLTELNLEDNMFTGKIPAFKQKN), and 197–218 (VTVNVANNQLEGRIPLTLGLMN). An N-linked (GlcNAc...) asparagine glycan is attached at Asn-218. Residues 243–263 (FFTVFLLALTILAVVVLITVF) form a helical membrane-spanning segment. Residues 264–676 (LSVCILSRRQ…RAMTEEFSLM (413 aa)) are Cytoplasmic-facing. The span at 319–330 (TVQRDSTATSGA) shows a compositional bias: polar residues. A disordered region spans residues 319–347 (TVQRDSTATSGAISVGGLSPDEDKRGDQR). The region spanning 366–640 (RASAEVLGSG…HEAVDRIEEV (275 aa)) is the Protein kinase domain. Position 368 is a phosphoserine (Ser-368). ATP contacts are provided by residues 372–380 (LGSGGFGSS) and Lys-394. Residues Ser-446 and Ser-543 each carry the phosphoserine modification. A disordered region spans residues 641–676 (DRDAGGGQESVRSSYVTASDGDHRSSRAMTEEFSLM).

It belongs to the protein kinase superfamily. Ser/Thr protein kinase family.

The protein resides in the membrane. It catalyses the reaction L-seryl-[protein] + ATP = O-phospho-L-seryl-[protein] + ADP + H(+). The catalysed reaction is L-threonyl-[protein] + ATP = O-phospho-L-threonyl-[protein] + ADP + H(+). In Arabidopsis thaliana (Mouse-ear cress), this protein is Probable LRR receptor-like serine/threonine-protein kinase At4g31250.